The primary structure comprises 829 residues: Leucine--tRNA ligase (829 aa).

Residues proline 42 to histidine 52 carry the 'HIGH' region motif. Positions lysine 582–serine 586 match the 'KMSKS' region motif. ATP is bound at residue lysine 585.

It belongs to the class-I aminoacyl-tRNA synthetase family.

It is found in the cytoplasm. It carries out the reaction tRNA(Leu) + L-leucine + ATP = L-leucyl-tRNA(Leu) + AMP + diphosphate. The polypeptide is Leucine--tRNA ligase (Moorella thermoacetica (strain ATCC 39073 / JCM 9320)).